Consider the following 764-residue polypeptide: 5-methyltetrahydropteroyltriglutamate--homocysteine methyltransferase (764 aa).

Residues 16-19 (RELK) and K115 contribute to the 5-methyltetrahydropteroyltri-L-glutamate site. L-homocysteine-binding positions include 435–437 (IGS) and E488. L-methionine contacts are provided by residues 435–437 (IGS) and E488. 5-methyltetrahydropteroyltri-L-glutamate-binding positions include 519 to 520 (RC) and W565. D603 is an L-homocysteine binding site. D603 contacts L-methionine. A 5-methyltetrahydropteroyltri-L-glutamate-binding site is contributed by E609. Residues H645, C647, and E669 each contribute to the Zn(2+) site. The active-site Proton donor is H698. C730 is a binding site for Zn(2+).

It belongs to the vitamin-B12 independent methionine synthase family. Zn(2+) is required as a cofactor.

It carries out the reaction 5-methyltetrahydropteroyltri-L-glutamate + L-homocysteine = tetrahydropteroyltri-L-glutamate + L-methionine. It functions in the pathway amino-acid biosynthesis; L-methionine biosynthesis via de novo pathway; L-methionine from L-homocysteine (MetE route): step 1/1. Its function is as follows. Catalyzes the transfer of a methyl group from 5-methyltetrahydrofolate to homocysteine resulting in methionine formation. In Burkholderia thailandensis (strain ATCC 700388 / DSM 13276 / CCUG 48851 / CIP 106301 / E264), this protein is 5-methyltetrahydropteroyltriglutamate--homocysteine methyltransferase.